The primary structure comprises 310 residues: L-lactate dehydrogenase (310 aa).

NAD(+) contacts are provided by residues 10–11 (MV), aspartate 32, tyrosine 62, and 76–77 (GV). Substrate contacts are provided by residues glutamine 79, arginine 85, and 117–120 (NPVD). NAD(+)-binding positions include 115-117 (ATN) and serine 140. 145–148 (DTAR) is a substrate binding site. Arginine 150 and histidine 165 together coordinate beta-D-fructose 1,6-bisphosphate. Histidine 172 functions as the Proton acceptor in the catalytic mechanism. Tyrosine 218 carries the post-translational modification Phosphotyrosine. Substrate is bound at residue threonine 227.

This sequence belongs to the LDH/MDH superfamily. LDH family. As to quaternary structure, homotetramer.

The protein resides in the cytoplasm. The catalysed reaction is (S)-lactate + NAD(+) = pyruvate + NADH + H(+). Its pathway is fermentation; pyruvate fermentation to lactate; (S)-lactate from pyruvate: step 1/1. Allosterically activated by fructose 1,6-bisphosphate (FBP). Catalyzes the conversion of lactate to pyruvate. This chain is L-lactate dehydrogenase, found in Thermus thermophilus (strain ATCC 27634 / DSM 579 / HB8).